We begin with the raw amino-acid sequence, 496 residues long: Glutamyl-tRNA(Gln) amidotransferase subunit B, organellar chromatophore (496 aa).

This sequence belongs to the GatB/GatE family. GatB subfamily. As to quaternary structure, subunit of the heterotrimeric GatCAB amidotransferase (AdT) complex, composed of A, B and C subunits.

The protein localises to the plastid. Its subcellular location is the organellar chromatophore. The catalysed reaction is L-glutamyl-tRNA(Gln) + L-glutamine + ATP + H2O = L-glutaminyl-tRNA(Gln) + L-glutamate + ADP + phosphate + H(+). Its function is as follows. Allows the formation of correctly charged Gln-tRNA(Gln) through the transamidation of misacylated Glu-tRNA(Gln). The reaction takes place in the presence of glutamine and ATP through an activated gamma-phospho-Glu-tRNA(Gln). In Paulinella chromatophora, this protein is Glutamyl-tRNA(Gln) amidotransferase subunit B, organellar chromatophore.